A 289-amino-acid chain; its full sequence is MLRDLFVKKKKYAAIPSEQVRKDVPDGVMTKCPKCKKIMYTKEVLKNLKVCVNCGYHHPMNAWERLDSILDEGSFREYDKEMVSLNPLEFPDYEEKLESDRKKTDLNEAVVTGEGTIDDMLVVVAVMDSRFRMGSMGSVVGEKIARAVEKAYDLQVPFIIFTASGGARMQEGILSLMQMAKTSVALKKHSNAGGLFISVMTHPTTGGVSASFASLGDYNLAEPGALIGFAGRRVIEQTVREKLPEDFQTAEFLLEHGQLDAVVHRDDMRESLRKILEVHQGGEMAVWQS.

Residues 28–289 (VMTKCPKCKK…QGGEMAVWQS (262 aa)) enclose the CoA carboxyltransferase N-terminal domain. Positions 32, 35, 51, and 54 each coordinate Zn(2+). The segment at 32 to 54 (CPKCKKIMYTKEVLKNLKVCVNC) adopts a C4-type zinc-finger fold.

This sequence belongs to the AccD/PCCB family. Acetyl-CoA carboxylase is a heterohexamer composed of biotin carboxyl carrier protein (AccB), biotin carboxylase (AccC) and two subunits each of ACCase subunit alpha (AccA) and ACCase subunit beta (AccD). It depends on Zn(2+) as a cofactor.

The protein resides in the cytoplasm. The catalysed reaction is N(6)-carboxybiotinyl-L-lysyl-[protein] + acetyl-CoA = N(6)-biotinyl-L-lysyl-[protein] + malonyl-CoA. It participates in lipid metabolism; malonyl-CoA biosynthesis; malonyl-CoA from acetyl-CoA: step 1/1. Functionally, component of the acetyl coenzyme A carboxylase (ACC) complex. Biotin carboxylase (BC) catalyzes the carboxylation of biotin on its carrier protein (BCCP) and then the CO(2) group is transferred by the transcarboxylase to acetyl-CoA to form malonyl-CoA. This chain is Acetyl-coenzyme A carboxylase carboxyl transferase subunit beta, found in Bacillus cereus (strain ZK / E33L).